The chain runs to 293 residues: MKRIFLFVATNIAVIAVMSIVLSLLGVDRFISQAGLNLPMLLVFSLVVGFTGAIISLLISKPMAKWSTGARVITAPSSSTELWLIDSVRKLSERAGIAMPEVAVYDGEPNAFATGAFKNSALVAVSTGLLQSMTKEEVEAVLAHEVAHVANGDMVTMTLVQGVVNTFVVFLARVVGYFVDRALSSRDSNNNGGQGIGYTITVLVCQVVFGIAASVIVAWFSRHREFRADAGAATLLGSPQPMMKALARLGGIAPNSLPEGMASMGINDKPGFAALFSSHPPIEQRIAALRSMQ.

2 helical membrane-spanning segments follow: residues 4 to 24 (IFLF…VLSL) and 39 to 59 (PMLL…SLLI). Histidine 144 is a binding site for Zn(2+). Glutamate 145 is an active-site residue. Histidine 148 contributes to the Zn(2+) binding site. 2 helical membrane passes run 159-179 (LVQG…GYFV) and 200-220 (ITVL…VAWF). Glutamate 225 contributes to the Zn(2+) binding site.

Belongs to the peptidase M48B family. Zn(2+) serves as cofactor.

The protein localises to the cell inner membrane. The sequence is that of Protease HtpX homolog from Herminiimonas arsenicoxydans.